Consider the following 249-residue polypeptide: Probable amino-acid import ATP-binding protein YxeO (249 aa).

Residues 2–239 enclose the ABC transporter domain; sequence ITVKNIRKAF…PKNERTKRFI (238 aa). Residue 34–41 coordinates ATP; that stretch reads GPSGSGKS.

This sequence belongs to the ABC transporter superfamily. As to quaternary structure, the complex is composed of two ATP-binding proteins (YxeO), two transmembrane proteins (YxeN) and a solute-binding protein (YxeM).

The protein resides in the cell membrane. Functionally, probably part of the ABC transporter complex YxeMNO that could be involved in amino-acid import. May transport S-methylcysteine. Responsible for energy coupling to the transport system. The protein is Probable amino-acid import ATP-binding protein YxeO (yxeO) of Bacillus subtilis (strain 168).